Reading from the N-terminus, the 454-residue chain is Bifunctional protein GlmU (454 aa).

Positions Met1 to Arg226 are pyrophosphorylase. UDP-N-acetyl-alpha-D-glucosamine-binding positions include Leu8 to Gly11, Lys22, Gln73, Gly78 to Thr79, Tyr100 to Asp102, Gly137, Glu151, Asn166, and Asn224. Mg(2+) is bound at residue Asp102. Mg(2+) is bound at residue Asn224. The segment at Leu227 to Gln247 is linker. The segment at Gly248–Lys454 is N-acetyltransferase. Positions 330 and 348 each coordinate UDP-N-acetyl-alpha-D-glucosamine. His360 (proton acceptor) is an active-site residue. UDP-N-acetyl-alpha-D-glucosamine is bound by residues Tyr363 and Asn374. Residues Ala377, Asn383–Tyr384, Ser402, Ala420, and Arg437 each bind acetyl-CoA.

This sequence in the N-terminal section; belongs to the N-acetylglucosamine-1-phosphate uridyltransferase family. In the C-terminal section; belongs to the transferase hexapeptide repeat family. Homotrimer. It depends on Mg(2+) as a cofactor.

Its subcellular location is the cytoplasm. The enzyme catalyses alpha-D-glucosamine 1-phosphate + acetyl-CoA = N-acetyl-alpha-D-glucosamine 1-phosphate + CoA + H(+). The catalysed reaction is N-acetyl-alpha-D-glucosamine 1-phosphate + UTP + H(+) = UDP-N-acetyl-alpha-D-glucosamine + diphosphate. The protein operates within nucleotide-sugar biosynthesis; UDP-N-acetyl-alpha-D-glucosamine biosynthesis; N-acetyl-alpha-D-glucosamine 1-phosphate from alpha-D-glucosamine 6-phosphate (route II): step 2/2. It functions in the pathway nucleotide-sugar biosynthesis; UDP-N-acetyl-alpha-D-glucosamine biosynthesis; UDP-N-acetyl-alpha-D-glucosamine from N-acetyl-alpha-D-glucosamine 1-phosphate: step 1/1. It participates in bacterial outer membrane biogenesis; LPS lipid A biosynthesis. Its function is as follows. Catalyzes the last two sequential reactions in the de novo biosynthetic pathway for UDP-N-acetylglucosamine (UDP-GlcNAc). The C-terminal domain catalyzes the transfer of acetyl group from acetyl coenzyme A to glucosamine-1-phosphate (GlcN-1-P) to produce N-acetylglucosamine-1-phosphate (GlcNAc-1-P), which is converted into UDP-GlcNAc by the transfer of uridine 5-monophosphate (from uridine 5-triphosphate), a reaction catalyzed by the N-terminal domain. This is Bifunctional protein GlmU from Acinetobacter baumannii (strain ACICU).